The primary structure comprises 285 residues: Mitochondrial substrate carrier family protein S (285 aa).

The Mitochondrial intermembrane segment spans residues 1–9; the sequence is MSTERGLKD. 3 Solcar repeats span residues 4 to 87, 96 to 183, and 197 to 283; these read ERGL…MKVL, LTVG…CKRY, and LNLP…VIKL. Residues 10–30 traverse the membrane as a helical segment; sequence SIAGTVAGAACLFTGHPFDTI. The Mitochondrial matrix segment spans residues 31–61; that stretch reads RVRLQTSNTPIGIMECFRNTIKYEGFSGLYK. Residues 62–82 traverse the membrane as a helical segment; the sequence is GVTSPLFGMMFETAVLFAGYG. At 83-101 the chain is on the mitochondrial intermembrane side; sequence QMKVLLQKDENTPLTVGQC. Residues 102 to 122 traverse the membrane as a helical segment; the sequence is AIAGGFAGVGASVVLTPVELV. Over 123–150 the chain is Mitochondrial matrix; it reads KCRLQVQTTGPQKYKGSLDCLVQILKEG. A helical membrane pass occupies residues 151–172; it reads GIRGAYRGFTPTIAREFVGNMA. Topologically, residues 173–199 are mitochondrial intermembrane; it reads FFSTYETCKRYFKNKENKPNDDDELNL. The helical transmembrane segment at 200 to 220 threads the bilayer; it reads PALIISGGLGGMAYWTVLYPV. At 221 to 258 the chain is on the mitochondrial matrix side; it reads DVAKSKIQISEGAGPSPSIVKVLKEIYSKEGVKGLFRG. A helical membrane pass occupies residues 259-277; sequence YTPTIIRSFPANAAMFSVY. Over 278–285 the chain is Mitochondrial intermembrane; sequence ELVIKLLG.

It belongs to the mitochondrial carrier (TC 2.A.29) family.

Its subcellular location is the mitochondrion inner membrane. Functionally, mitochondrial solute carriers shuttle metabolites, nucleotides, and cofactors through the mitochondrial inner membrane. Mediates the transport of acylcarnitines of different length across the mitochondrial inner membrane from the cytosol to the mitochondrial matrix for their oxidation by the mitochondrial fatty acid-oxidation pathway. The sequence is that of Mitochondrial substrate carrier family protein S (mcfS) from Dictyostelium discoideum (Social amoeba).